The primary structure comprises 88 residues: Small ribosomal subunit protein bS18 (88 aa).

Belongs to the bacterial ribosomal protein bS18 family. In terms of assembly, part of the 30S ribosomal subunit. Forms a tight heterodimer with protein bS6.

Binds as a heterodimer with protein bS6 to the central domain of the 16S rRNA, where it helps stabilize the platform of the 30S subunit. This chain is Small ribosomal subunit protein bS18, found in Syntrophus aciditrophicus (strain SB).